Consider the following 401-residue polypeptide: MDTQAFKQTLHKSDRYNRRGFGSANKRAQALAEAYQSGLIGSIRENGNLLEHGRLKVKLAEAFGFCWGVERSVAMAYETRKHYPNERIWITNEIIHNPSVNDHLRKMNVLFISEEKGVKDFSVVKDGDVVILPAFGATVQDMKLLHDRGCHIIDTTCPWVSKVWHTVEKHKKHTFTSIIHGKYKHEETLATSSFAGTYLVLFDLEEANYVSDYILGKGNREDFLKRFSKASSAGFDPDKDLQKVGVANQTTMLKSETEEIGRLFEKTMLQRFGPAQLNEHFLAINTICDATEERQGAMFSLVDEPLDLMVVIGGFNSSNTTHLQEIAISRGIRSFHIDTPERIGEETNTITHMPLEGGELLTEENFLQNGNISVGITSGASTPDRVVEDVIHKLMKIGENF.

[4Fe-4S] cluster is bound at residue Cys-66. His-96 contributes to the (2E)-4-hydroxy-3-methylbut-2-enyl diphosphate binding site. His-96 lines the dimethylallyl diphosphate pocket. His-96 is an isopentenyl diphosphate binding site. Cys-157 is a [4Fe-4S] cluster binding site. His-185 is a binding site for (2E)-4-hydroxy-3-methylbut-2-enyl diphosphate. Dimethylallyl diphosphate is bound at residue His-185. His-185 contributes to the isopentenyl diphosphate binding site. The active-site Proton donor is Glu-187. Thr-250 provides a ligand contact to (2E)-4-hydroxy-3-methylbut-2-enyl diphosphate. Cys-288 contacts [4Fe-4S] cluster. Ser-317, Ser-318, Asn-319, and Ser-381 together coordinate (2E)-4-hydroxy-3-methylbut-2-enyl diphosphate. The dimethylallyl diphosphate site is built by Ser-317, Ser-318, Asn-319, and Ser-381. Residues Ser-317, Ser-318, Asn-319, and Ser-381 each contribute to the isopentenyl diphosphate site.

Belongs to the IspH family. Requires [4Fe-4S] cluster as cofactor.

The catalysed reaction is isopentenyl diphosphate + 2 oxidized [2Fe-2S]-[ferredoxin] + H2O = (2E)-4-hydroxy-3-methylbut-2-enyl diphosphate + 2 reduced [2Fe-2S]-[ferredoxin] + 2 H(+). It catalyses the reaction dimethylallyl diphosphate + 2 oxidized [2Fe-2S]-[ferredoxin] + H2O = (2E)-4-hydroxy-3-methylbut-2-enyl diphosphate + 2 reduced [2Fe-2S]-[ferredoxin] + 2 H(+). It functions in the pathway isoprenoid biosynthesis; dimethylallyl diphosphate biosynthesis; dimethylallyl diphosphate from (2E)-4-hydroxy-3-methylbutenyl diphosphate: step 1/1. The protein operates within isoprenoid biosynthesis; isopentenyl diphosphate biosynthesis via DXP pathway; isopentenyl diphosphate from 1-deoxy-D-xylulose 5-phosphate: step 6/6. Functionally, catalyzes the conversion of 1-hydroxy-2-methyl-2-(E)-butenyl 4-diphosphate (HMBPP) into a mixture of isopentenyl diphosphate (IPP) and dimethylallyl diphosphate (DMAPP). Acts in the terminal step of the DOXP/MEP pathway for isoprenoid precursor biosynthesis. This Prochlorococcus marinus (strain NATL1A) protein is 4-hydroxy-3-methylbut-2-enyl diphosphate reductase.